The following is a 728-amino-acid chain: MIQAMPSAPTVDFKDPAYYFNRELSWLAFNQRVLHEGLDDRTPLLERLKFLAIFCSNLDEFFMVRVAGLKQQVEANVTKLTADGRTPSQQLKEISKSLRPLVYQQNQVFEYVLKEKLADEGIFLNDYVDLSQEERQYLHQFYDDHIFPVLTPLAVDPSHPFPYISNLSLNLGVVVRDPDTDEELFARVKVPPTLPRFVALPEDVCQPDPNKPWLWTGVPLEQVIAHNLASLFPGMIIQECHLFRVTRNADIAVEEDEADDLLLAIEEELRKRRVGKSAVRLEINASTPKNIRDRLMTDLGLEEIDVYDIDGLLGLKDLFFFLSLPAPHLKDEPWASVIPPRLKHVYEFVDGDEDGRVQQEGIDIFTLIRQGDILVHHPYQSFTASVQQFITQAAYDPHVLTIKMTLYRTSGDSPIVNALIAAAENGKQVAVLVELKARFDEENNINWARKLEQYGVHVVYGLVGLKTHTKTVLVVRQEGPDIRRYVHIGTGNYNPKTAKLYTDLGLITCRPELGNDLTNLFNFLTGYSRQKDYQKLLVAPVNMRERMVAMIEREADHCLNGGTGRIVAKMNSLVDTQIIRALYAASQAGVQIDLIVRGICCLRPGVENVSENIRVISVIGRLLEHSRIFYFHNGGEEEIYIGSADWMSRNLTRRVEAVVPVEQPDLKQELQSILGILLADNRQAWELQPDGTYVQRRPASPEQSQSSQAIFTAQAIAETTEDPELRSV.

Asparagine 57 is an ATP binding site. Arginine 408 and arginine 438 together coordinate Mg(2+). The active-site Phosphohistidine intermediate is histidine 468. ATP is bound by residues tyrosine 501, arginine 597, and histidine 625. Residues 694–728 form a disordered region; the sequence is VQRRPASPEQSQSSQAIFTAQAIAETTEDPELRSV. The segment covering 695–709 has biased composition (low complexity); that stretch reads QRRPASPEQSQSSQA.

Belongs to the polyphosphate kinase 1 (PPK1) family. Mg(2+) is required as a cofactor. An intermediate of this reaction is the autophosphorylated ppk in which a phosphate is covalently linked to a histidine residue through a N-P bond.

The enzyme catalyses [phosphate](n) + ATP = [phosphate](n+1) + ADP. In terms of biological role, catalyzes the reversible transfer of the terminal phosphate of ATP to form a long-chain polyphosphate (polyP). The chain is Polyphosphate kinase from Synechocystis sp. (strain ATCC 27184 / PCC 6803 / Kazusa).